The primary structure comprises 488 residues: Bile acid receptor (488 aa).

A Glycyl lysine isopeptide (Lys-Gly) (interchain with G-Cter in SUMO1) cross-link involves residue Lys133. A DNA-binding region (nuclear receptor) is located at residues 135–210 (DELCVVCGDR…MGMLAECMYT (76 aa)). The segment at 138–158 (CVVCGDRASGYHYNALTCEGC) adopts an NR C4-type zinc-finger fold. Phosphoserine; by PKC/PRKCA is present on residues Ser146 and Ser165. Lys168 is modified (N6-acetyllysine; by EP300). The segment at 174 to 198 (CKNGGNCVMDMYMRRKCQECRLRKC) adopts an NR C4-type zinc-finger fold. Position 221 is an N6-methyllysine; by SETD7 (Lys221). Lys228 bears the N6-acetyllysine; by EP300 mark. An NR LBD domain is found at 264 to 488 (DQQTLLDYIM…PLLCEIWDVQ (225 aa)). A Glycyl lysine isopeptide (Lys-Gly) (interchain with G-Cter in SUMO1) cross-link involves residue Lys291. Residues Arg347, Tyr377, and Tyr385 each contribute to the chenodeoxycholate site. The residue at position 458 (Thr458) is a Phosphothreonine; by PKC/PRKCZ. Residue His463 coordinates chenodeoxycholate.

This sequence belongs to the nuclear hormone receptor family. NR1 subfamily. Heterodimer with RXRA; the heterodimerization enhances the binding affinity for LXXLL motifs from coactivators. Binds DNA predominantly as a heterodimer with RXRA. After activation by agonist binding interacts with coactivators. Interacts with PPARGC1A, SMARCA4 and EP300. Interacts with NCOA1, NCOA2, CARM1, SETD7, PRMT1, GPS2, SMARCA4 and MED1. Interacts with XRCC5 and XRCC6; decreasing NR1H4/FXR transactivation activity towards ABCB11/BSEP. Interacts with PAGR1 and NCOA6; indicative for an association with an MLL2/MLL3 complex (ASCOM). Interacts with NR5A2. Acetylated by EP300. Lys-228 as is the major acetylation site for EP300; the dynamicly regulated acetylation inhibits heterodimerization with RXRA and transactivation activity. Deacetylated by SIRT1. Elevated acetylation levels are found in metabolic disease states (mouse models of obesity and type II diabetes). Post-translationally, methylation may increase transactivation of target genes. In terms of processing, phosphorylation by PKC/PRKCA increases transactivation activity by promoting association with PPARGC1A. Sumoylated upon ligand binding. Expressed in liver and kidney. Expressed in pancreatic beta cells and macrophages. Expressed in the villus epithelium in adult ileum, with highest expression in the intervillus regions. Expression in colon is reduced by inflammation.

The protein resides in the nucleus. Its function is as follows. Ligand-activated transcription factor. Receptor for bile acids (BAs) such as chenodeoxycholic acid (CDCA), lithocholic acid, deoxycholic acid (DCA) and allocholic acid (ACA). Plays a essential role in BA homeostasis through the regulation of genes involved in BA synthesis, conjugation and enterohepatic circulation. Also regulates lipid and glucose homeostasis and is involved in innate immune response. The FXR-RXR heterodimer binds predominantly to farnesoid X receptor response elements (FXREs) containing two inverted repeats of the consensus sequence 5'-AGGTCA-3' in which the monomers are spaced by 1 nucleotide (IR-1) but also to tandem repeat DR1 sites with lower affinity, and can be activated by either FXR or RXR-specific ligands. It is proposed that monomeric nuclear receptors such as NR5A2/LRH-1 bound to coregulatory nuclear responsive element (NRE) halfsites located in close proximity to FXREs modulate transcriptional activity. In the liver activates transcription of the corepressor NR0B2 thereby indirectly inhibiting CYP7A1 and CYP8B1 (involved in BA synthesis) implicating at least in part histone demethylase KDM1A resulting in epigenomic repression, and SLC10A1/NTCP (involved in hepatic uptake of conjugated BAs). Activates transcription of the repressor MAFG (involved in regulation of BA synthesis). Activates transcription of SLC27A5/BACS and BAAT (involved in BA conjugation), ABCB11/BSEP (involved in bile salt export) by directly recruiting histone methyltransferase CARM1, and ABCC2/MRP2 (involved in secretion of conjugated BAs) and ABCB4 (involved in secretion of phosphatidylcholine in the small intestine). In ileal enterocytes activates FABP6/IBABP (involved in cytosolic transport), SLC51A/OSTA and SLC51B/OSTB (involved in secretion of conjugated BAs to the portal blood), and repressor NR0B2/SHP thereby indirectly inhibiting SLC10A2/ASBT (involved in BA uptake). In the intestine activates FGF15 expression and secretion leading to hepatic CYP7A1 repression; the function also involves the coordinated induction of hepatic KLB/beta-klotho expression. Transcriptional activation of FABP6/IBAP and SCD1 but not of ABCB11 is isoform-specific. Regulates transcription of liver UGT2B4 and SULT2A1 involved in BA detoxification; binding to the UGT2B4 promoter seems to imply a monomeric transactivation independent of RXRA. Modulates lipid homeostasis by activating liver NR0B2/SHP-mediated repression of SREBF1 isoform SREBP-1C (involved in de novo lipogenesis), expression of PLTP (involved in HDL formation), SCARB1 (involved in HDL hepatic uptake), APOE, APOC1, APOC4, VLDLR and SDC1 (involved in the hepatic uptake of LDL and IDL remnants), and inhibiting expression of MTTP (involved in VLDL assembly). Increases expression of APOC2 (promoting lipoprotein lipase activity implicated in triglyceride clearance). Transrepresses APOA1 probably involving a monomeric competition with NR2A1 for binding to a DR1 element. Also reduces triglyceride clearance by inhibiting expression of ANGPTL3 and APOC3 (both involved in inhibition of lipoprotein lipase). Involved in glucose homeostasis by modulating hepatic gluconeogenesis through activation of NR0B2/SHP-mediated repression of respective genes. Modulates glycogen synthesis (inducing phosphorylation of glycogen synthase kinase-3). Modulates glucose-stimulated insulin secretion and is involved in insulin resistance. Involved in intestinal innate immunity. Plays a role in protecting the distal small intestine against bacterial overgrowth and preservation of the epithelial barrier. Down-regulates inflammatory cytokine expression in several types of immune cells including macrophages and mononuclear cells. Mediates transrepression of TLR4-induced cytokine expression; the function seems to require its sumoylation and prevents N-CoR nuclear receptor corepressor clearance from target genes such as IL1B and NOS2. Involved in the TLR9-mediated protective mechanism in intestinal inflammation. Plays a anti-inflammatory role in liver inflammation; proposed to inhibit pro-inflammatory (but not antiapoptotic) NF-kappa-B signaling. In terms of biological role, activates transcription of IBAP and SDC1. The chain is Bile acid receptor (Nr1h4) from Mus musculus (Mouse).